Reading from the N-terminus, the 356-residue chain is Sorbitol dehydrogenase (356 aa).

Residue Cys-44 coordinates Zn(2+). Tyr-50 contributes to the substrate binding site. The Zn(2+) site is built by His-69 and Glu-70. Residue Glu-155 coordinates substrate. 3 residues coordinate NAD(+): Ile-183, Asp-203, and Arg-208. Ser-210 and Ser-224 each carry phosphoserine. NAD(+)-binding positions include 272–274 and 296–298; these read VGL and VFR. 2 residues coordinate substrate: Arg-298 and Tyr-299.

The protein belongs to the zinc-containing alcohol dehydrogenase family. As to quaternary structure, homotetramer. Zn(2+) is required as a cofactor. In terms of tissue distribution, expressed in lens.

It localises to the mitochondrion membrane. It is found in the cell projection. The protein resides in the cilium. The protein localises to the flagellum. It catalyses the reaction xylitol + NAD(+) = D-xylulose + NADH + H(+). It carries out the reaction keto-D-fructose + NADH + H(+) = D-sorbitol + NAD(+). The enzyme catalyses L-iditol + NAD(+) = keto-L-sorbose + NADH + H(+). Its activity is regulated as follows. Inhibited in vitro by metal chelators such as EDTA and 1,10-phenanthroline. Functionally, polyol dehydrogenase that catalyzes the reversible NAD(+)-dependent oxidation of various sugar alcohols. Is mostly active with xylitol, D-sorbitol (D-glucitol) and L-iditol as substrates, leading to the C2-oxidized products D-xylulose, D-fructose and L-sorbose, respectively. Is a key enzyme in the polyol pathway that interconverts glucose and fructose via sorbitol, which constitutes an important alternate route for glucose metabolism. May play a role in sperm motility by using sorbitol as an alternative energy source for sperm motility. Cannot use NADP(+) as the electron acceptor. Has no activity on ethanol, methanol, glycerol, galactitol and fructose 6-phosphate. The sequence is that of Sorbitol dehydrogenase (SORD) from Bos taurus (Bovine).